The sequence spans 388 residues: Ras-related protein Rab-26 (388 aa).

A disordered region spans residues 1–115 (MASTAVGLGG…HHHSQLSLTG (115 aa)). A compositionally biased stretch (gly residues) spans 7–21 (GLGGGEGDPGAGGPP). Residues 47–56 (RIEELRRRPF) are compositionally biased toward basic and acidic residues. A compositionally biased stretch (low complexity) spans 67 to 86 (PASVSASITTTTTQQQQQHH). Residues 87-109 (NPSHHHQSSHHQPSHHHHHHHHS) show a composition bias toward basic residues. Residue 197–204 (GDSGVGKT) participates in GTP binding. An Effector region motif is present at residues 219 to 228 (SFSATVGIAL). GTP-binding positions include 246-250 (DTAGQ) and 304-307 (NKAD). The S-palmitoyl cysteine moiety is linked to residue Cys-382. Cysteine methyl ester is present on Cys-385. Cys-385 carries the S-geranylgeranyl cysteine lipid modification. A propeptide spans 386-388 (RNM) (removed in mature form).

It belongs to the small GTPase superfamily. Rab family.

The protein resides in the cell membrane. Functionally, participates in exocrine secretion. The chain is Ras-related protein Rab-26 from Drosophila melanogaster (Fruit fly).